A 277-amino-acid chain; its full sequence is Diaminopimelate epimerase (277 aa).

Residues N13, Q46, and N66 each contribute to the substrate site. C75 functions as the Proton donor in the catalytic mechanism. Substrate-binding positions include 76-77 (GN), N160, N193, and 211-212 (ER). The active-site Proton acceptor is the C220. 221 to 222 (GS) contacts substrate.

Belongs to the diaminopimelate epimerase family. Homodimer.

The protein resides in the cytoplasm. It carries out the reaction (2S,6S)-2,6-diaminopimelate = meso-2,6-diaminopimelate. The protein operates within amino-acid biosynthesis; L-lysine biosynthesis via DAP pathway; DL-2,6-diaminopimelate from LL-2,6-diaminopimelate: step 1/1. Functionally, catalyzes the stereoinversion of LL-2,6-diaminopimelate (L,L-DAP) to meso-diaminopimelate (meso-DAP), a precursor of L-lysine and an essential component of the bacterial peptidoglycan. The polypeptide is Diaminopimelate epimerase (Legionella pneumophila (strain Lens)).